The sequence spans 1005 residues: Pikachurin (1005 aa).

The signal sequence occupies residues methionine 1–serine 24. Fibronectin type-III domains are found at residues proline 37–glutamine 136 and alanine 144–proline 239. N-linked (GlcNAc...) asparagine glycosylation occurs at asparagine 47. A disordered region spans residues proline 281–glycine 328. A compositionally biased stretch (polar residues) spans alanine 305–glutamate 314. In terms of domain architecture, EGF-like 1 spans phenylalanine 339–serine 377. Intrachain disulfides connect cysteine 343/cysteine 354, cysteine 348/cysteine 365, cysteine 367/cysteine 376, cysteine 530/cysteine 560, cysteine 565/cysteine 576, cysteine 570/cysteine 586, cysteine 588/cysteine 597, cysteine 784/cysteine 795, cysteine 789/cysteine 804, cysteine 806/cysteine 815, and cysteine 975/cysteine 1002. Positions isoleucine 382–cysteine 560 constitute a Laminin G-like 1 domain. EGF-like domains follow at residues serine 561–glutamate 598 and alanine 780–glutamine 816. The Laminin G-like 2 domain maps to isoleucine 605–cysteine 784. Residues isoleucine 823–cysteine 1002 enclose the Laminin G-like 3 domain.

Interacts with DAG1 alpha-dystroglycan. Interacts with GPR158 and GPR179; transsynaptic interaction is required for synaptic organization of photoreceptor cells. O-glycosylated; contains chondroitin sulfate and heparan sulfate.

The protein localises to the secreted. It localises to the extracellular space. Its subcellular location is the extracellular matrix. It is found in the synaptic cleft. The protein resides in the presynaptic active zone. Involved in both the retinal photoreceptor ribbon synapse formation and physiological functions of visual perception. Plays a key role in the synaptic organization of photoreceptors by mediating transsynaptic interaction between alpha-dystroglycan and GPR179 on the postsynaptic membrane. Necessary for proper bipolar dendritic tip apposition to the photoreceptor ribbon synapse. Promotes matrix assembly and cell adhesiveness. The polypeptide is Pikachurin (Egflam) (Rattus norvegicus (Rat)).